We begin with the raw amino-acid sequence, 85 residues long: Small ribosomal subunit protein bS18c (85 aa).

The protein belongs to the bacterial ribosomal protein bS18 family. In terms of assembly, part of the 30S ribosomal subunit.

It localises to the plastid. The protein localises to the chloroplast. In Tupiella akineta (Green alga), this protein is Small ribosomal subunit protein bS18c.